A 379-amino-acid polypeptide reads, in one-letter code: Probable leucine aminopeptidase TRV_05286 (379 aa).

An N-terminal signal peptide occupies residues 1 to 18; it reads MKIATLAVVSAFAATAIA. Zn(2+) contacts are provided by histidine 182 and aspartate 201. N-linked (GlcNAc...) asparagine glycans are attached at residues asparagine 202 and asparagine 226. The Zn(2+) site is built by glutamate 240 and aspartate 267. Cysteine 312 and cysteine 316 are joined by a disulfide. Residue histidine 345 participates in Zn(2+) binding.

This sequence belongs to the peptidase M28 family. M28E subfamily. Monomer. The cofactor is Zn(2+).

The protein resides in the secreted. In terms of biological role, probable extracellular aminopeptidase which contributes to pathogenicity. The polypeptide is Probable leucine aminopeptidase TRV_05286 (Trichophyton verrucosum (strain HKI 0517)).